The chain runs to 525 residues: Bifunctional enzyme NanE/NanK (525 aa).

The manNAc-6-P epimerase stretch occupies residues 1 to 241 (MRGSPRNLCR…DAVESAAKPS (241 aa)). Residues 242 to 525 (SPVLAFDIGG…VADLAATYFS (284 aa)) are manNAc kinase. ATP-binding positions include 246–253 (AFDIGGTK) and 372–379 (GIGGGIVL).

This sequence in the N-terminal section; belongs to the NanE family. The protein in the C-terminal section; belongs to the ROK (NagC/XylR) family. NanK subfamily.

The enzyme catalyses an N-acyl-D-glucosamine 6-phosphate = an N-acyl-D-mannosamine 6-phosphate. It catalyses the reaction an N-acyl-D-mannosamine + ATP = an N-acyl-D-mannosamine 6-phosphate + ADP + H(+). It functions in the pathway amino-sugar metabolism; N-acetylneuraminate degradation; D-fructose 6-phosphate from N-acetylneuraminate: step 2/5. It participates in amino-sugar metabolism; N-acetylneuraminate degradation; D-fructose 6-phosphate from N-acetylneuraminate: step 3/5. Its function is as follows. Converts N-acetylmannosamine-6-phosphate (ManNAc-6-P) to N-acetylglucosamine-6-phosphate (GlcNAc-6-P). Functionally, catalyzes the phosphorylation of N-acetylmannosamine (ManNAc) to ManNAc-6-P. In Brucella suis biovar 1 (strain 1330), this protein is Bifunctional enzyme NanE/NanK (nanEK).